An 87-amino-acid chain; its full sequence is Putative acyl-CoA-binding protein (87 aa).

An ACB domain is found at Met1 to Met86. An acyl-CoA-binding positions include Lys13, Tyr28–Lys32, Lys50, Lys54, and Tyr73.

Belongs to the ACBP family.

Its subcellular location is the cytoplasm. It localises to the nucleus. Functionally, binds medium- and long-chain acyl-CoA esters with very high affinity and may function as an intracellular carrier of acyl-CoA esters. May enhance the activity of the ceramide synthase complex. The polypeptide is Putative acyl-CoA-binding protein (Schizosaccharomyces pombe (strain 972 / ATCC 24843) (Fission yeast)).